Consider the following 217-residue polypeptide: Homeobox protein Hox-B7 (217 aa).

The short motif at 126 to 131 (IYPWMR) is the Antp-type hexapeptide element. A DNA-binding region (homeobox) is located at residues 137-196 (RKRGRQTYTRYQTLELEKEFHYNRYLTRRRRIEIAHTLCLTERQIKIWFQNRRMKWKKEN). The segment at 194–217 (KENKTAGPGTTGQDRAEAEEEEEE) is disordered.

This sequence belongs to the Antp homeobox family. As to quaternary structure, forms a DNA-binding heterodimer with transcription factor PBX1.

It is found in the nucleus. In terms of biological role, sequence-specific transcription factor which is part of a developmental regulatory system that provides cells with specific positional identities on the anterior-posterior axis. The chain is Homeobox protein Hox-B7 (HOXB7) from Homo sapiens (Human).